The sequence spans 218 residues: Small ribosomal subunit protein uS7 (218 aa).

This sequence belongs to the universal ribosomal protein uS7 family. Part of the 30S ribosomal subunit.

In terms of biological role, one of the primary rRNA binding proteins, it binds directly to 16S rRNA where it nucleates assembly of the head domain of the 30S subunit. Is located at the subunit interface close to the decoding center. The protein is Small ribosomal subunit protein uS7 (rps7) of Pyrococcus horikoshii (strain ATCC 700860 / DSM 12428 / JCM 9974 / NBRC 100139 / OT-3).